Reading from the N-terminus, the 349-residue chain is ATPase GET3 (349 aa).

Residue 26–33 (KGGVGKTT) coordinates ATP. Asp57 is a catalytic residue. Glu242 and Asn269 together coordinate ATP. Residues Cys281 and Cys284 each contribute to the Zn(2+) site.

This sequence belongs to the arsA ATPase family. In terms of assembly, homodimer. Component of the Golgi to ER traffic (GET) complex, which is composed of GET1, GET2 and GET3. Within the complex, GET1 and GET2 form a heterotetramer which is stabilized by phosphatidylinositol binding and which binds to the GET3 homodimer. Interacts with the chloride channel protein GEF1.

The protein localises to the cytoplasm. It is found in the endoplasmic reticulum. Its subcellular location is the golgi apparatus. In terms of biological role, ATPase required for the post-translational delivery of tail-anchored (TA) proteins to the endoplasmic reticulum. Recognizes and selectively binds the transmembrane domain of TA proteins in the cytosol. This complex then targets to the endoplasmic reticulum by membrane-bound receptors GET1 and GET2, where the tail-anchored protein is released for insertion. This process is regulated by ATP binding and hydrolysis. ATP binding drives the homodimer towards the closed dimer state, facilitating recognition of newly synthesized TA membrane proteins. ATP hydrolysis is required for insertion. Subsequently, the homodimer reverts towards the open dimer state, lowering its affinity for the GET1-GET2 receptor, and returning it to the cytosol to initiate a new round of targeting. Cooperates with the HDEL receptor ERD2 to mediate the ATP-dependent retrieval of resident ER proteins that contain a C-terminal H-D-E-L retention signal from the Golgi to the ER. Involved in low-level resistance to the oxyanions arsenite and arsenate, and in heat tolerance. The protein is ATPase GET3 of Lodderomyces elongisporus (strain ATCC 11503 / CBS 2605 / JCM 1781 / NBRC 1676 / NRRL YB-4239) (Yeast).